The following is a 96-amino-acid chain: NADH-ubiquinone oxidoreductase chain 4L (96 aa).

A run of 3 helical transmembrane segments spans residues 2–22 (IMILYWSLPMILFILGLFCFV), 28–48 (LLSMLLSLEFIVLMLFFMLFI), and 62–82 (MFLTFSVCEGALGLSILVSMI).

It belongs to the complex I subunit 4L family.

It is found in the mitochondrion membrane. It carries out the reaction a ubiquinone + NADH + 5 H(+)(in) = a ubiquinol + NAD(+) + 4 H(+)(out). Functionally, core subunit of the mitochondrial membrane respiratory chain NADH dehydrogenase (Complex I) that is believed to belong to the minimal assembly required for catalysis. Complex I functions in the transfer of electrons from NADH to the respiratory chain. The immediate electron acceptor for the enzyme is believed to be ubiquinone. In Drosophila melanogaster (Fruit fly), this protein is NADH-ubiquinone oxidoreductase chain 4L (mt:ND4L).